A 410-amino-acid polypeptide reads, in one-letter code: Adenosine receptor A2a (410 aa).

At Met1–Ser4 the chain is on the extracellular side. Residues Val5–Trp29 form a helical membrane-spanning segment. Residues Ile30–Asn39 lie on the Cytoplasmic side of the membrane. The helical transmembrane segment at Phe40–Ile63 threads the bilayer. Topologically, residues Ser64–Cys74 are extracellular. 3 disulfide bridges follow: Cys68/Cys154, Cys71/Cys143, and Cys74/Cys161. Residues Leu75–Ile97 traverse the membrane as a helical segment. Residues Asp98–Arg117 lie on the Cytoplasmic side of the membrane. Residues Ala118–Trp140 form a helical membrane-spanning segment. At Asn141–Pro168 the chain is on the extracellular side. Residues Asn142 and Asn149 are each glycosylated (N-linked (GlcNAc...) asparagine). Glu164 is an adenosine binding site. Residues Met169 to Leu193 form a helical membrane-spanning segment. Residues Arg194–Ser229 lie on the Cytoplasmic side of the membrane. The helical transmembrane segment at Leu230–Phe253 threads the bilayer. Asn248 contributes to the adenosine binding site. An intrachain disulfide couples Cys254 to Cys257. At Cys254–Pro261 the chain is on the extracellular side. The helical transmembrane segment at Pro262–Tyr285 threads the bilayer. Adenosine is bound by residues Ser272 and His273. Over Arg286–Ser410 the chain is Cytoplasmic. The interaction with GAS2L2 stretch occupies residues His322–Ser410. The disordered stretch occupies residues Ala342–Ser410. Residues Thr377–Leu389 are compositionally biased toward basic and acidic residues. Over residues Ala401 to Ser410 the composition is skewed to polar residues.

Belongs to the G-protein coupled receptor 1 family. In terms of assembly, interacts (via cytoplasmic C-terminal domain) with USP4; the interaction is direct. May interact with DRD4. Interacts with NECAB2. Interacts (via cytoplasmic C-terminal domain) with GAS2L2; interaction enhances receptor-mediated adenylyl cyclase activity. In terms of processing, ubiquitinated. Deubiquitinated by USP4; leading to stabilization and expression at the cell surface.

It localises to the cell membrane. Functionally, receptor for adenosine. The activity of this receptor is mediated by G proteins which activate adenylyl cyclase. In Mus musculus (Mouse), this protein is Adenosine receptor A2a (Adora2a).